The chain runs to 657 residues: Tetracycline resistance protein TetQ (657 aa).

In terms of domain architecture, tr-type G spans 17-260 (MNIINLGILA…AISSFILPPE (244 aa)). Residues 26-33 (AHIDAGKT), 90-94 (DTPGH), and 144-147 (NKID) contribute to the GTP site.

This sequence belongs to the TRAFAC class translation factor GTPase superfamily. Classic translation factor GTPase family. TetM/TetO subfamily.

In terms of biological role, abolishes the inhibitory effect of tetracycline on protein synthesis by non-covalently modifying ribosomes. Confers mild resistance to tetracycline when expressed in E.coli. This Bacteroides fragilis protein is Tetracycline resistance protein TetQ (tetQ).